The chain runs to 219 residues: Redox-sensing transcriptional repressor Rex (219 aa).

A DNA-binding region (H-T-H motif) is located at residues 17–56; the sequence is RYLRYVEDLLNHDIMRISSSELSQRMGYTASQVRQDFNNF. Residue 91–96 coordinates NAD(+); that stretch reads GVGNLG.

It belongs to the transcriptional regulatory Rex family. As to quaternary structure, homodimer.

It is found in the cytoplasm. Functionally, modulates transcription in response to changes in cellular NADH/NAD(+) redox state. The sequence is that of Redox-sensing transcriptional repressor Rex from Caldicellulosiruptor saccharolyticus (strain ATCC 43494 / DSM 8903 / Tp8T 6331).